The sequence spans 170 residues: Copper transporter 1 (170 aa).

The segment at 1–29 (MDHDHMHGMPRPSSSSSSSPSSMMNNGSM) is disordered. Positions 9–29 (MPRPSSSSSSSPSSMMNNGSM) are enriched in low complexity. 2 consecutive transmembrane segments (helical) span residues 65–85 (GMYALCLIFVFFLAVLTEWLA) and 114–134 (IGLAYLVMLAVMSFNAGVFLV).

The protein belongs to the copper transporter (Ctr) (TC 1.A.56) family. SLC31A subfamily. In terms of tissue distribution, expressed in the root apex, lateral root primordia, embryo, trichomes, guard cells and pollen grains.

It is found in the membrane. In terms of biological role, copper transporter involved in copper acquisition and transport in leaves. Required for copper homeostasis and normal plant growth and development. This Arabidopsis thaliana (Mouse-ear cress) protein is Copper transporter 1 (COPT1).